We begin with the raw amino-acid sequence, 150 residues long: 3-hydroxyacyl-[acyl-carrier-protein] dehydratase FabZ (150 aa).

The active site involves His57.

Belongs to the thioester dehydratase family. FabZ subfamily.

It localises to the cytoplasm. It carries out the reaction a (3R)-hydroxyacyl-[ACP] = a (2E)-enoyl-[ACP] + H2O. In terms of biological role, involved in unsaturated fatty acids biosynthesis. Catalyzes the dehydration of short chain beta-hydroxyacyl-ACPs and long chain saturated and unsaturated beta-hydroxyacyl-ACPs. The polypeptide is 3-hydroxyacyl-[acyl-carrier-protein] dehydratase FabZ (Mannheimia succiniciproducens (strain KCTC 0769BP / MBEL55E)).